The following is a 279-amino-acid chain: Diaminopimelate epimerase (279 aa).

Substrate-binding residues include Asn-13 and Asn-66. The Proton donor role is filled by Cys-75. Substrate contacts are provided by residues 76-77 (GN), Asn-164, Asn-197, and 215-216 (ER). Residue Cys-224 is the Proton acceptor of the active site. Position 225-226 (225-226 (GT)) interacts with substrate.

This sequence belongs to the diaminopimelate epimerase family. Homodimer.

The protein resides in the cytoplasm. It catalyses the reaction (2S,6S)-2,6-diaminopimelate = meso-2,6-diaminopimelate. It participates in amino-acid biosynthesis; L-lysine biosynthesis via DAP pathway; DL-2,6-diaminopimelate from LL-2,6-diaminopimelate: step 1/1. Functionally, catalyzes the stereoinversion of LL-2,6-diaminopimelate (L,L-DAP) to meso-diaminopimelate (meso-DAP), a precursor of L-lysine and an essential component of the bacterial peptidoglycan. The protein is Diaminopimelate epimerase of Nostoc punctiforme (strain ATCC 29133 / PCC 73102).